A 366-amino-acid chain; its full sequence is UDP-N-acetylglucosamine--N-acetylmuramyl-(pentapeptide) pyrophosphoryl-undecaprenol N-acetylglucosamine transferase (366 aa).

UDP-N-acetyl-alpha-D-glucosamine contacts are provided by residues Thr14–Gly16, Asn125, Arg168, Ser196, and Gln297.

The protein belongs to the glycosyltransferase 28 family. MurG subfamily.

The protein localises to the cell inner membrane. It carries out the reaction di-trans,octa-cis-undecaprenyl diphospho-N-acetyl-alpha-D-muramoyl-L-alanyl-D-glutamyl-meso-2,6-diaminopimeloyl-D-alanyl-D-alanine + UDP-N-acetyl-alpha-D-glucosamine = di-trans,octa-cis-undecaprenyl diphospho-[N-acetyl-alpha-D-glucosaminyl-(1-&gt;4)]-N-acetyl-alpha-D-muramoyl-L-alanyl-D-glutamyl-meso-2,6-diaminopimeloyl-D-alanyl-D-alanine + UDP + H(+). It participates in cell wall biogenesis; peptidoglycan biosynthesis. In terms of biological role, cell wall formation. Catalyzes the transfer of a GlcNAc subunit on undecaprenyl-pyrophosphoryl-MurNAc-pentapeptide (lipid intermediate I) to form undecaprenyl-pyrophosphoryl-MurNAc-(pentapeptide)GlcNAc (lipid intermediate II). This Rhodopseudomonas palustris (strain HaA2) protein is UDP-N-acetylglucosamine--N-acetylmuramyl-(pentapeptide) pyrophosphoryl-undecaprenol N-acetylglucosamine transferase.